A 290-amino-acid chain; its full sequence is Enoyl-CoA hydratase, mitochondrial (290 aa).

Residues 1-29 (MAALRALLPRACNSLLSPVRCPEFRRFAS) constitute a mitochondrion transit peptide. 98–101 (ADIK) contacts substrate. Lys101 and Lys115 each carry N6-acetyllysine; alternate. Lys101 and Lys115 each carry N6-succinyllysine; alternate. Residue Gly141 coordinates substrate. Lys204 is modified (N6-succinyllysine). Lys211 carries the post-translational modification N6-acetyllysine.

Belongs to the enoyl-CoA hydratase/isomerase family. In terms of assembly, homohexamer; dimer of trimers. As to expression, detected in liver (at protein level).

It localises to the mitochondrion matrix. It carries out the reaction a (3S)-3-hydroxyacyl-CoA = a (2E)-enoyl-CoA + H2O. The catalysed reaction is a (3E)-enoyl-CoA = a 4-saturated (2E)-enoyl-CoA. The enzyme catalyses (3E)-hexenoyl-CoA = (2E)-hexenoyl-CoA. It catalyses the reaction (3S)-3-hydroxybutanoyl-CoA = (2E)-butenoyl-CoA + H2O. It carries out the reaction 3-hydroxyisovaleryl-CoA = 3-methylbut-2-enoyl-CoA + H2O. The catalysed reaction is 3-hydroxypropanoyl-CoA = acryloyl-CoA + H2O. The enzyme catalyses 3-hydroxybutanoyl-CoA = (2E)-butenoyl-CoA + H2O. It catalyses the reaction 2-methylpropenoyl-CoA + H2O = (S)-3-hydroxyisobutanoyl-CoA. It carries out the reaction (3S)-hydroxyhexanoyl-CoA = (2E)-hexenoyl-CoA + H2O. The catalysed reaction is (3S)-hydroxydecanoyl-CoA = (2E)-decenoyl-CoA + H2O. It functions in the pathway lipid metabolism; fatty acid beta-oxidation. Converts unsaturated trans-2-enoyl-CoA species ((2E)-enoyl-CoA) to the corresponding 3(S)-3-hydroxyacyl-CoA species through addition of a water molecule to the double bond. Catalyzes the hydration of medium- and short-chained fatty enoyl-CoA thioesters from 4 carbons long (C4) up to C16. Has high substrate specificity for crotonyl-CoA ((2E)-butenoyl-CoA) and moderate specificity for acryloyl-CoA, 3-methylcrotonyl-CoA (3-methyl-(2E)-butenoyl-CoA) and methacrylyl-CoA ((2E)-2-methylpropenoyl-CoA). Can bind tiglyl-CoA (2-methylcrotonoyl-CoA), but hydrates only a small amount of this substrate. Plays a key role in the beta-oxidation spiral of short- and medium-chain fatty acid oxidation. At a lower rate than the hydratase reaction, catalyzes the isomerase reaction of trans-3-enoyl-CoA species (such as (3E)-hexenoyl-CoA) to trans-2-enoyl-CoA species (such as (2E)-hexenoyl-CoA), which are subsequently hydrated to 3(S)-3-hydroxyacyl-CoA species (such as (3S)-hydroxyhexanoyl-CoA). This Rattus norvegicus (Rat) protein is Enoyl-CoA hydratase, mitochondrial.